The following is a 977-amino-acid chain: AP-2 complex subunit alpha-1 (977 aa).

Positions 614–702 (AKLKRKKGPG…PSLGPTPEEA (89 aa)) are disordered. Ser626 and Ser652 each carry phosphoserine. The segment covering 646-657 (PTPSTVSTPSPS) has biased composition (low complexity). A Phosphothreonine modification is found at Thr653. At Ser655 the chain carries Phosphoserine. Residues 666-675 (APPPAAPPAP) show a composition bias toward pro residues.

Belongs to the adaptor complexes large subunit family. In terms of assembly, adaptor protein complex 2 (AP-2) is a heterotetramer composed of two large adaptins (alpha-type subunit AP2A1 or AP2A2 and beta-type subunit AP2B1), a medium adaptin (mu-type subunit AP2M1) and a small adaptin (sigma-type subunit AP2S1). Interacts with HIP1 and RAB11FIP2. Interacts with SLC12A5. Interacts with clathrin. Interacts with SGIP1. Interacts with RFTN1. Interacts with KIAA1107. Interacts with PICALM. Together with AP2B1 and AP2M1, it interacts with ADAM10; this interaction facilitates ADAM10 endocytosis from the plasma membrane during long-term potentiation in hippocampal neurons. Interacts with ABCB11; this interaction regulates cell membrane expression of ABCB11 through its internalization in a clathrin-dependent manner and its subsequent degradation. Probably interacts with ACE2 (via endocytic sorting signal motif); the interaction is inhibited by ACE2 phosphorylation. Expressed in the brain (at protein level). Isoform A: Expressed only in neuronal tissue and skeletal muscle. Isoform B: Widely expressed.

Its subcellular location is the cell membrane. It localises to the membrane. The protein localises to the coated pit. In terms of biological role, component of the adaptor protein complex 2 (AP-2). Adaptor protein complexes function in protein transport via transport vesicles in different membrane traffic pathways. Adaptor protein complexes are vesicle coat components and appear to be involved in cargo selection and vesicle formation. AP-2 is involved in clathrin-dependent endocytosis in which cargo proteins are incorporated into vesicles surrounded by clathrin (clathrin-coated vesicles, CCVs) which are destined for fusion with the early endosome. The clathrin lattice serves as a mechanical scaffold but is itself unable to bind directly to membrane components. Clathrin-associated adaptor protein (AP) complexes which can bind directly to both the clathrin lattice and to the lipid and protein components of membranes are considered to be the major clathrin adaptors contributing the CCV formation. AP-2 also serves as a cargo receptor to selectively sort the membrane proteins involved in receptor-mediated endocytosis. AP-2 seems to play a role in the recycling of synaptic vesicle membranes from the presynaptic surface. AP-2 recognizes Y-X-X-[FILMV] (Y-X-X-Phi) and [ED]-X-X-X-L-[LI] endocytosis signal motifs within the cytosolic tails of transmembrane cargo molecules. AP-2 may also play a role in maintaining normal post-endocytic trafficking through the ARF6-regulated, non-clathrin pathway. The AP-2 alpha subunit binds polyphosphoinositide-containing lipids, positioning AP-2 on the membrane. During long-term potentiation in hippocampal neurons, AP-2 is responsible for the endocytosis of ADAM10. The AP-2 alpha subunit acts via its C-terminal appendage domain as a scaffolding platform for endocytic accessory proteins. The AP-2 alpha and AP-2 sigma subunits are thought to contribute to the recognition of the [ED]-X-X-X-L-[LI] motif. The polypeptide is AP-2 complex subunit alpha-1 (Ap2a1) (Mus musculus (Mouse)).